Reading from the N-terminus, the 1270-residue chain is DNA-directed RNA polymerase subunit beta (1270 aa).

It belongs to the RNA polymerase beta chain family. The RNAP catalytic core consists of 2 alpha, 1 beta, 1 beta' and 1 omega subunit. When a sigma factor is associated with the core the holoenzyme is formed, which can initiate transcription.

It carries out the reaction RNA(n) + a ribonucleoside 5'-triphosphate = RNA(n+1) + diphosphate. Its function is as follows. DNA-dependent RNA polymerase catalyzes the transcription of DNA into RNA using the four ribonucleoside triphosphates as substrates. This is DNA-directed RNA polymerase subunit beta from Flavobacterium johnsoniae (strain ATCC 17061 / DSM 2064 / JCM 8514 / BCRC 14874 / CCUG 350202 / NBRC 14942 / NCIMB 11054 / UW101) (Cytophaga johnsonae).